A 997-amino-acid polypeptide reads, in one-letter code: LPS-assembly protein LptD (997 aa).

An N-terminal signal peptide occupies residues methionine 1 to alanine 27.

This sequence belongs to the LptD family. In terms of assembly, component of the lipopolysaccharide transport and assembly complex. Interacts with LptE and LptA.

The protein localises to the cell outer membrane. Together with LptE, is involved in the assembly of lipopolysaccharide (LPS) at the surface of the outer membrane. This Psychrobacter cryohalolentis (strain ATCC BAA-1226 / DSM 17306 / VKM B-2378 / K5) protein is LPS-assembly protein LptD.